The sequence spans 276 residues: F-actin-capping protein subunit beta (276 aa).

It belongs to the F-actin-capping protein beta subunit family. In terms of assembly, component of the F-actin capping complex, composed of a heterodimer of an alpha and a beta subunit. Subunit of dynactin, a multiprotein complex part of a tripartite complex with dynein and a adapter, such as BICDL1, BICD2 or HOOK3.

The protein localises to the cytoplasm. It is found in the cytoskeleton. In terms of biological role, F-actin-capping proteins bind in a Ca(2+)-independent manner to the fast growing ends of actin filaments (barbed end) thereby blocking the exchange of subunits at these ends. Unlike other capping proteins (such as gelsolin and severin), these proteins do not sever actin filaments. Forms, with CAPZB, the barbed end of the fast growing ends of actin filaments in the dynactin complex and stabilizes dynactin structure. The dynactin multiprotein complex activates the molecular motor dynein for ultra-processive transport along microtubules. This is F-actin-capping protein subunit beta (cpb) from Drosophila melanogaster (Fruit fly).